We begin with the raw amino-acid sequence, 381 residues long: N-acetylglucosamine-6-phosphate deacetylase (381 aa).

Glu129 lines the a divalent metal cation pocket. Val140–His141 lines the substrate pocket. Positions 193 and 214 each coordinate a divalent metal cation. Residues Asn217–Ala218, Arg226, and Asp246–His249 contribute to the substrate site. Catalysis depends on Asp271, which acts as the Proton donor/acceptor. Ile306 to Gly308 is a binding site for substrate.

Belongs to the metallo-dependent hydrolases superfamily. NagA family. Homotetramer. It depends on a divalent metal cation as a cofactor.

The catalysed reaction is N-acetyl-D-glucosamine 6-phosphate + H2O = D-glucosamine 6-phosphate + acetate. It participates in amino-sugar metabolism; N-acetylneuraminate degradation; D-fructose 6-phosphate from N-acetylneuraminate: step 4/5. Its function is as follows. Involved in the first committed step in the biosynthesis of amino-sugar-nucleotides. Catalyzes the hydrolysis of the N-acetyl group of N-acetylglucosamine-6-phosphate (GlcNAc-6-P) to yield glucosamine 6-phosphate and acetate. The sequence is that of N-acetylglucosamine-6-phosphate deacetylase (nagA) from Haemophilus influenzae (strain ATCC 51907 / DSM 11121 / KW20 / Rd).